We begin with the raw amino-acid sequence, 244 residues long: Phosphoadenosine 5'-phosphosulfate reductase (244 aa).

Cys-239 (nucleophile; cysteine thiosulfonate intermediate) is an active-site residue.

Belongs to the PAPS reductase family. CysH subfamily.

The protein localises to the cytoplasm. It catalyses the reaction [thioredoxin]-disulfide + sulfite + adenosine 3',5'-bisphosphate + 2 H(+) = [thioredoxin]-dithiol + 3'-phosphoadenylyl sulfate. It functions in the pathway sulfur metabolism; hydrogen sulfide biosynthesis; sulfite from sulfate: step 3/3. Functionally, catalyzes the formation of sulfite from phosphoadenosine 5'-phosphosulfate (PAPS) using thioredoxin as an electron donor. This Salmonella choleraesuis (strain SC-B67) protein is Phosphoadenosine 5'-phosphosulfate reductase.